The following is a 262-amino-acid chain: Shikimate dehydrogenase (NADP(+)) (262 aa).

Shikimate is bound by residues 15–17 and Thr62; that span reads SRS. Residue Lys66 is the Proton acceptor of the active site. Glu78 is an NADP(+) binding site. Positions 87 and 102 each coordinate shikimate. NADP(+)-binding positions include 126-130, 150-155, and Met214; these read GAGGA and NRTLAR. Residue Tyr216 participates in shikimate binding. NADP(+) is bound at residue Gly236.

This sequence belongs to the shikimate dehydrogenase family. As to quaternary structure, homodimer.

The enzyme catalyses shikimate + NADP(+) = 3-dehydroshikimate + NADPH + H(+). The protein operates within metabolic intermediate biosynthesis; chorismate biosynthesis; chorismate from D-erythrose 4-phosphate and phosphoenolpyruvate: step 4/7. Its function is as follows. Involved in the biosynthesis of the chorismate, which leads to the biosynthesis of aromatic amino acids. Catalyzes the reversible NADPH linked reduction of 3-dehydroshikimate (DHSA) to yield shikimate (SA). This is Shikimate dehydrogenase (NADP(+)) from Acinetobacter baumannii (strain AB0057).